A 317-amino-acid chain; its full sequence is Olfactory receptor 5K16 (317 aa).

At 1–28 (MEKTNHSLTTQFILVGFSDHPDLKTPLF) the chain is on the extracellular side. The N-linked (GlcNAc...) asparagine glycan is linked to Asn5. The helical transmembrane segment at 29 to 49 (LLFSVIYLVTMVGNLGLVAVI) threads the bilayer. The Cytoplasmic segment spans residues 50 to 56 (YLEPRLH). Residues 57–77 (TPMYIFLGNLALMDSCCSCAI) form a helical membrane-spanning segment. Residues 78-93 (TPKILENFFSVDRRIS) lie on the Extracellular side of the membrane. The helical transmembrane segment at 94–114 (LYECMAQFYFLCLAETADCFL) threads the bilayer. Cys97 and Cys189 are disulfide-bonded. Residues 115-144 (LAAMAYDRYVAICNPLQYHSMMSKKLSIQM) lie on the Cytoplasmic side of the membrane. A helical membrane pass occupies residues 145–165 (SIGTFITSNLHSLIHVGCLLR). At 166 to 198 (LTFCKSNRIDHFFCDILPLYRLSCTDPFINELM) the chain is on the extracellular side. The chain crosses the membrane as a helical span at residues 199–219 (IYIFSMPIQVFTITTVLVSYF). The Cytoplasmic portion of the chain corresponds to 220–239 (CILLTIFKMKSKDGRGKAFS). A helical transmembrane segment spans residues 240-259 (TCASHFFSVSIFYVCLLMYI). Topologically, residues 260–268 (RPFDEGNKD) are extracellular. A helical membrane pass occupies residues 269-289 (IPVAVFYTIIIPLLNPFIYSL). The Cytoplasmic segment spans residues 290–317 (RNKEVVNAVKKVMKTHSIFKNASASMAR).

This sequence belongs to the G-protein coupled receptor 1 family.

It is found in the cell membrane. Functionally, potential odorant receptor. In Mus musculus (Mouse), this protein is Olfactory receptor 5K16.